Consider the following 978-residue polypeptide: Alanine--tRNA ligase, chloroplastic/mitochondrial (978 aa).

Positions 655, 659, 758, and 762 each coordinate Zn(2+). A Glycyl lysine isopeptide (Lys-Gly) (interchain with G-Cter in ubiquitin) cross-link involves residue K773.

The protein belongs to the class-II aminoacyl-tRNA synthetase family. In terms of assembly, monomer. Zn(2+) serves as cofactor.

The protein resides in the plastid. It localises to the chloroplast. Its subcellular location is the mitochondrion. The catalysed reaction is tRNA(Ala) + L-alanine + ATP = L-alanyl-tRNA(Ala) + AMP + diphosphate. Its function is as follows. Catalyzes the attachment of alanine to tRNA(Ala) in a two-step reaction: alanine is first activated by ATP to form Ala-AMP and then transferred to the acceptor end of tRNA(Ala). Also edits incorrectly charged tRNA(Ala) via its editing domain. This chain is Alanine--tRNA ligase, chloroplastic/mitochondrial (EMB86), found in Arabidopsis thaliana (Mouse-ear cress).